The sequence spans 224 residues: Deoxyribose-phosphate aldolase (224 aa).

The active-site Proton donor/acceptor is Asp-92. Lys-155 functions as the Schiff-base intermediate with acetaldehyde in the catalytic mechanism. Lys-184 functions as the Proton donor/acceptor in the catalytic mechanism.

The protein belongs to the DeoC/FbaB aldolase family. DeoC type 1 subfamily.

The protein resides in the cytoplasm. It catalyses the reaction 2-deoxy-D-ribose 5-phosphate = D-glyceraldehyde 3-phosphate + acetaldehyde. Its pathway is carbohydrate degradation; 2-deoxy-D-ribose 1-phosphate degradation; D-glyceraldehyde 3-phosphate and acetaldehyde from 2-deoxy-alpha-D-ribose 1-phosphate: step 2/2. Its function is as follows. Catalyzes a reversible aldol reaction between acetaldehyde and D-glyceraldehyde 3-phosphate to generate 2-deoxy-D-ribose 5-phosphate. This chain is Deoxyribose-phosphate aldolase, found in Clostridium perfringens (strain ATCC 13124 / DSM 756 / JCM 1290 / NCIMB 6125 / NCTC 8237 / Type A).